Here is a 72-residue protein sequence, read N- to C-terminus: Translation initiation factor IF-1 (72 aa).

The 72-residue stretch at 1-72 (MAKQSAIEQD…SKGRIVFRYK (72 aa)) folds into the S1-like domain.

Belongs to the IF-1 family. As to quaternary structure, component of the 30S ribosomal translation pre-initiation complex which assembles on the 30S ribosome in the order IF-2 and IF-3, IF-1 and N-formylmethionyl-tRNA(fMet); mRNA recruitment can occur at any time during PIC assembly.

Its subcellular location is the cytoplasm. One of the essential components for the initiation of protein synthesis. Stabilizes the binding of IF-2 and IF-3 on the 30S subunit to which N-formylmethionyl-tRNA(fMet) subsequently binds. Helps modulate mRNA selection, yielding the 30S pre-initiation complex (PIC). Upon addition of the 50S ribosomal subunit IF-1, IF-2 and IF-3 are released leaving the mature 70S translation initiation complex. The polypeptide is Translation initiation factor IF-1 (Bacteroides fragilis (strain ATCC 25285 / DSM 2151 / CCUG 4856 / JCM 11019 / LMG 10263 / NCTC 9343 / Onslow / VPI 2553 / EN-2)).